The primary structure comprises 398 residues: Protein-glutamate methylesterase/protein-glutamine glutaminase (398 aa).

The 118-residue stretch at lysine 4 to leucine 121 folds into the Response regulatory domain. Aspartate 55 is modified (4-aspartylphosphate). Positions arginine 133–serine 200 are disordered. Polar residues-rich tracts occupy residues arginine 136–isoleucine 146 and arginine 168–serine 200. One can recognise a CheB-type methylesterase domain in the interval serine 205–glycine 398. Catalysis depends on residues serine 217, histidine 244, and aspartate 340.

Belongs to the CheB family. Post-translationally, phosphorylated by CheA. Phosphorylation of the N-terminal regulatory domain activates the methylesterase activity.

The protein resides in the cytoplasm. The catalysed reaction is [protein]-L-glutamate 5-O-methyl ester + H2O = L-glutamyl-[protein] + methanol + H(+). It carries out the reaction L-glutaminyl-[protein] + H2O = L-glutamyl-[protein] + NH4(+). Functionally, involved in chemotaxis. Part of a chemotaxis signal transduction system that modulates chemotaxis in response to various stimuli. Catalyzes the demethylation of specific methylglutamate residues introduced into the chemoreceptors (methyl-accepting chemotaxis proteins or MCP) by CheR. Also mediates the irreversible deamidation of specific glutamine residues to glutamic acid. The protein is Protein-glutamate methylesterase/protein-glutamine glutaminase of Shewanella frigidimarina (strain NCIMB 400).